Here is a 1483-residue protein sequence, read N- to C-terminus: Cystic fibrosis transmembrane conductance regulator (1483 aa).

Over 1–77 (MQRSPLEKAS…KLINALRRCF (77 aa)) the chain is Cytoplasmic. A helical transmembrane segment spans residues 78-98 (FWRFAFYGILLYLGEVTKAVQ). One can recognise an ABC transmembrane type-1 1 domain in the interval 81-365 (FAFYGILLYL…WAVQTWYDSL (285 aa)). At 99-122 (PLLLGRIIASYDPDNKQERSIAIY) the chain is on the extracellular side. Residues 123–146 (LAIGLCLLFIMRPLLLHPAIFGLH) traverse the membrane as a helical segment. Residues 147–195 (HIGMQIRIAMFSLIYKKTLKLSSRVLDKISIGQLVSLLSNNLNKFDEGL) lie on the Cytoplasmic side of the membrane. Residues 196–216 (ALAHFVWIAPLQVTLLMGLLW) traverse the membrane as a helical segment. At 217–222 (DLLQAS) the chain is on the extracellular side. A helical membrane pass occupies residues 223–243 (AFCGLAFLIVLALVQAGLGRM). Over 244–298 (IMKYRDQRAGKINERLVITSEVIENIQSVKAYCWEEAMEKIIENIRQTELKLTRK) the chain is Cytoplasmic. The helical transmembrane segment at 299–319 (AAHVRYFNSSAFFFSGFFVVS) threads the bilayer. Over 320-339 (LSVLPYALIKTIILRKIFTT) the chain is Extracellular. Residues 340-358 (ISFCIVLRMAVTRQFPWAV) traverse the membrane as a helical segment. The Cytoplasmic portion of the chain corresponds to 359-859 (QTWYDSLGAI…YLRYITVHKN (501 aa)). ATP contacts are provided by residues W401, S434, 458 to 465 (GSTGAGKT), and Q493. Residues 423–646 (NGDNSLFFSN…RPDFSSKLMG (224 aa)) enclose the ABC transporter 1 domain. C524 carries S-palmitoyl cysteine lipidation. 2 positions are modified to phosphoserine: S549 and S660. The disordered R region stretch occupies residues 654–832 (SPERRNSIIT…EEINEEDLKE (179 aa)). The residue at position 670 (S670) is a Phosphoserine; by PKA. Phosphoserine is present on S686. K688 is covalently cross-linked (Glycyl lysine isopeptide (Lys-Gly) (interchain with G-Cter in ubiquitin)). Residues S700 and S712 each carry the phosphoserine modification. T717 carries the phosphothreonine modification. Phosphoserine occurs at positions 737, 768, 791, 796, and 814. Residues 860 to 880 (LIFVLIWCLVIFLAEVAVSLV) traverse the membrane as a helical segment. Residues 860–1156 (LIFVLIWCLV…AVNSSIEVDS (297 aa)) enclose the ABC transmembrane type-1 2 domain. The Extracellular segment spans residues 881–919 (VLWILRNLSSQDKGNSTQSVNSSYAVIFTSTSAYYIFYI). N-linked (GlcNAc...) asparagine glycosylation is found at N887, N895, and N901. A discontinuously helical membrane pass occupies residues 920-940 (YVGVADTLLALGLFRGLPLVH). Residues 941 to 991 (TLITVSKILHHKMLHSVLQAPMSTLNTLKAGGILNRFSKDIAILDDLLPLT) lie on the Cytoplasmic side of the membrane. A helical membrane pass occupies residues 992–1012 (IFDFIQLLLIVIGAVAVVSVL). At 1013-1014 (QP) the chain is on the extracellular side. Residues 1015 to 1035 (YIFLATVPVIAAFIILRAYFL) traverse the membrane as a helical segment. The Cytoplasmic segment spans residues 1036-1096 (HTSQQLKQLE…TANWFLYLST (61 aa)). A helical membrane pass occupies residues 1097-1117 (LRWFQMRMEIIFVIFFIAVTF). Residues 1118–1131 (ISILTTGEGEGTVG) are Extracellular-facing. The chain crosses the membrane as a helical span at residues 1132 to 1152 (IILTLAMNIMGTLQWAVNSSI). Residues 1153–1483 (EVDSLMRSVS…TEDEVQDTRL (331 aa)) lie on the Cytoplasmic side of the membrane. Residues 1213 to 1446 (MTVKDLTAKY…RSAFRQAIGP (234 aa)) form the ABC transporter 2 domain. ATP-binding positions include Y1222 and 1247–1254 (GRTGSGKS). Positions 1389–1483 (RTLKQAFADC…TEDEVQDTRL (95 aa)) are interaction with GORASP2. The S-palmitoyl cysteine moiety is linked to residue C1398. The segment at 1444 to 1483 (IGPPERPGLLPHRLSSRQRSPSRIAALKEETEDEVQDTRL) is disordered. Position 1459 is a phosphoserine (S1459). Residues 1473 to 1483 (ETEDEVQDTRL) show a composition bias toward acidic residues. Residues 1481 to 1483 (TRL) carry the PDZ-binding motif.

It belongs to the ABC transporter superfamily. ABCC family. CFTR transporter (TC 3.A.1.202) subfamily. As to quaternary structure, monomer; does not require oligomerization for channel activity. May form oligomers in the membrane. Interacts with SLC26A3, SLC26A6 and NHERF1. Interacts with SHANK2. Interacts with MYO6. Interacts (via C-terminus) with GOPC (via PDZ domain); this promotes CFTR internalization and thereby decreases channel activity. Interacts with SLC4A7 through NHERF1. Found in a complex with MYO5B and RAB11A. Interacts with ANO1. Interacts with SLC26A8. Interacts with AHCYL1; the interaction increases CFTR activity. Interacts with CSE1L. The core-glycosylated form interacts with GORASP2 (via PDZ GRASP-type 1 domain) in respone to ER stress. Interacts with MARCHF2; the interaction leads to CFTR ubiqtuitination and degradation. Interacts with ADGRG2. N-glycosylated. In terms of processing, phosphorylated; cAMP treatment promotes phosphorylation and activates the channel. Dephosphorylation decreases the ATPase activity (in vitro). Phosphorylation at PKA sites activates the channel. Phosphorylation at PKC sites enhances the response to phosphorylation by PKA. Phosphorylated by AMPK; this inhibits channel activity. Post-translationally, ubiquitinated, leading to its degradation in the lysosome. Deubiquitination by USP10 in early endosomes enhances its endocytic recycling to the cell membrane. Ubiquitinated by RNF185 during ER stress. Ubiquitinated by MARCHF2.

Its subcellular location is the apical cell membrane. The protein resides in the early endosome membrane. The protein localises to the cell membrane. It is found in the recycling endosome membrane. It localises to the endoplasmic reticulum membrane. Its subcellular location is the nucleus. It catalyses the reaction ATP + H2O + closed Cl(-) channel = ADP + phosphate + open Cl(-) channel.. It carries out the reaction chloride(in) = chloride(out). The catalysed reaction is hydrogencarbonate(in) = hydrogencarbonate(out). The enzyme catalyses ATP + H2O = ADP + phosphate + H(+). In terms of biological role, epithelial ion channel that plays an important role in the regulation of epithelial ion and water transport and fluid homeostasis. Mediates the transport of chloride ions across the cell membrane. Possesses an intrinsic ATPase activity and utilizes ATP to gate its channel; the passive flow of anions through the channel is gated by cycles of ATP binding and hydrolysis by the ATP-binding domains. The ion channel is also permeable to HCO(3)(-); selectivity depends on the extracellular chloride concentration. Exerts its function also by modulating the activity of other ion channels and transporters. Contributes to the regulation of the pH and the ion content of the epithelial fluid layer. Modulates the activity of the epithelial sodium channel (ENaC) complex, in part by regulating the cell surface expression of the ENaC complex. May regulate bicarbonate secretion and salvage in epithelial cells by regulating the transporter SLC4A7. Can inhibit the chloride channel activity of ANO1. Plays a role in the chloride and bicarbonate homeostasis during sperm epididymal maturation and capacitation. The protein is Cystic fibrosis transmembrane conductance regulator of Canis lupus familiaris (Dog).